A 146-amino-acid chain; its full sequence is Transcriptional regulator AdcR (146 aa).

Positions 1-143 (MRQLAKDINA…IQRFLTALVG (143 aa)) constitute an HTH marR-type domain. Zn(2+) is bound by residues glutamate 24, cysteine 30, glutamate 41, and histidine 42. The H-T-H motif DNA-binding region spans 54–77 (NSELARRLNVSQAAVTKAIKSLVK). Residues glutamate 107, histidine 108, and histidine 112 each contribute to the Zn(2+) site.

In terms of assembly, homodimer.

Its activity is regulated as follows. Zinc acts as a coregulator and is required for DNA-binding activity. In terms of biological role, zinc-responsive regulator that acts both as a repressor and as an activator by regulating directly the promoters of its target genes. In the presence of zinc, directly represses the expression of the adcRCBA operon, of genes coding for a group of surface antigen zinc-binding pneumococcal histidine triad proteins (PhtA, PhtB, PhtD and PhtE), and of adcAII. Can also activate expression of adh. This is Transcriptional regulator AdcR (adcR) from Streptococcus pneumoniae serotype 2 (strain D39 / NCTC 7466).